A 341-amino-acid chain; its full sequence is Phosphate acyltransferase (341 aa).

This sequence belongs to the PlsX family. As to quaternary structure, homodimer. Probably interacts with PlsY.

The protein resides in the cytoplasm. It carries out the reaction a fatty acyl-[ACP] + phosphate = an acyl phosphate + holo-[ACP]. Its pathway is lipid metabolism; phospholipid metabolism. Its function is as follows. Catalyzes the reversible formation of acyl-phosphate (acyl-PO(4)) from acyl-[acyl-carrier-protein] (acyl-ACP). This enzyme utilizes acyl-ACP as fatty acyl donor, but not acyl-CoA. The chain is Phosphate acyltransferase from Aliivibrio fischeri (strain ATCC 700601 / ES114) (Vibrio fischeri).